Reading from the N-terminus, the 81-residue chain is Cytotoxin 1a (81 aa).

The signal sequence occupies residues 1–21; it reads MKTLLLTLVVVTIVCLDLGYT. Intrachain disulfides connect Cys-24-Cys-42, Cys-35-Cys-59, Cys-63-Cys-74, and Cys-75-Cys-80.

Belongs to the three-finger toxin family. Short-chain subfamily. Type IA cytotoxin sub-subfamily. As to quaternary structure, monomer in solution; Homodimer and oligomer in the presence of negatively charged lipids forming a pore with a size ranging between 20 and 30 Angstroms. Expressed by the venom gland.

The protein localises to the secreted. Its subcellular location is the target cell membrane. Functionally, shows cytolytic activity on many different cells by forming pore in lipid membranes. In vivo, increases heart rate or kills the animal by cardiac arrest. In addition, it binds to heparin with high affinity, interacts with Kv channel-interacting protein 1 (KCNIP1) in a calcium-independent manner, and binds to integrin alpha-V/beta-3 (ITGAV/ITGB3) with moderate affinity. The polypeptide is Cytotoxin 1a (Naja atra (Chinese cobra)).